The sequence spans 220 residues: Dual specificity phosphatase 29 (220 aa).

The Tyrosine-protein phosphatase domain occupies 54-202; it reads HVNEVWPKLY…LRELDKQLVQ (149 aa). 146-153 is a binding site for substrate; it reads HCVMGRSR. The Phosphocysteine intermediate role is filled by C147.

Belongs to the protein-tyrosine phosphatase family. Non-receptor class dual specificity subfamily. Homodimer. Interacts with PRKAA2.

The protein resides in the cytoplasm. The protein localises to the nucleus. The catalysed reaction is O-phospho-L-tyrosyl-[protein] + H2O = L-tyrosyl-[protein] + phosphate. It catalyses the reaction O-phospho-L-seryl-[protein] + H2O = L-seryl-[protein] + phosphate. The enzyme catalyses O-phospho-L-threonyl-[protein] + H2O = L-threonyl-[protein] + phosphate. Dual specificity phosphatase able to dephosphorylate phosphotyrosine, phosphoserine and phosphothreonine residues within the same substrate, with a preference for phosphotyrosine as a substrate. Involved in the modulation of intracellular signaling cascades. In skeletal muscle regulates systemic glucose homeostasis by activating, AMPK, an energy sensor protein kinase. Affects MAP kinase signaling though modulation of the ERK1/2 cascade in skeletal muscle promoting muscle cell differentiation, development and atrophy. The protein is Dual specificity phosphatase 29 (DUSP29) of Pan troglodytes (Chimpanzee).